The sequence spans 327 residues: DNA repair and recombination protein RadA (327 aa).

Residue 113–120 (GEFGSGKS) participates in ATP binding.

Belongs to the eukaryotic RecA-like protein family.

In terms of biological role, involved in DNA repair and in homologous recombination. Binds and assemble on single-stranded DNA to form a nucleoprotein filament. Hydrolyzes ATP in a ssDNA-dependent manner and promotes DNA strand exchange between homologous DNA molecules. The chain is DNA repair and recombination protein RadA from Ignicoccus hospitalis (strain KIN4/I / DSM 18386 / JCM 14125).